A 60-amino-acid chain; its full sequence is Large ribosomal subunit protein uL30 (60 aa).

Belongs to the universal ribosomal protein uL30 family. As to quaternary structure, part of the 50S ribosomal subunit.

The chain is Large ribosomal subunit protein uL30 from Acidothermus cellulolyticus (strain ATCC 43068 / DSM 8971 / 11B).